Consider the following 139-residue polypeptide: Small ribosomal subunit protein eS6 (139 aa).

Belongs to the eukaryotic ribosomal protein eS6 family.

The protein is Small ribosomal subunit protein eS6 of Methanosarcina barkeri (strain Fusaro / DSM 804).